Reading from the N-terminus, the 1564-residue chain is MQRGKPCRALPTLKCQTFCQRHGLMFEVVDLRWGIRNIEATDHLTTELCLEEVDRCWKTSIGPAFVALIGDQYGPCLIPSRIDEKEWEVLRDHLTARPSDLELVARYFQRDENAFPPTYVLQAPGTGEACEPEEATLTSVLRSGAQEARRLGLITQEQWQHYHRSVIEWEIERSLLSSEDREQGATVFLREIQDLHKHILEDCALRMVDRLADGCLDADAQNLLSSLKSHITDMHPGVLKTHRLPWSRDLVNPKNKTHACYLKELGEQFVVRANHQVLTRLRELDTAGQELAWLYQEIRHHLWQSSEVIQTFCGRQELLARLGQQLRHDDSKQHTPLVLFGPPGIGKTALMCKLAEQMPRLLGHKTVTVLRLLGTSQMSSDARGLLKSICFQVCLAYGLPLPPAQVLDAHTRVVQFFHTLLHTVSCRNFESLVLLLDAMDDLDSVRHARRVPWLPLNCPPRVHLILSACSGALGVLDTLQRVLLDPEAYWEVKPLSGNQGQQMIQLLLAAARRTLSPVHTDLLWASLPECGNPGRLRLAFEEARKWASFTVPVPLATTAEEATHQLCTRLEQTHGQLLVAHVLGYIVSSRHGLSEAELKDVLSLDDEVLQDVYRDWTPPSKELLRFPPLLWVRLRRDLGYYLARRPVDGFTLLAIAHRQLVEVVRERYLSGSERAKRHGVLADFFSGTWSQGTKKLITLPLVGKPLNLDRKVAPQPLWFSHTVANLRKLKELPYHLLHSGRLEELKQEVLGSMSWISCRGISGGIEDLLDDFDLCAPHLDSPEVGLVREALQLCRPAVELRGMERSLLYTELLARLHFFATSHPALVGQLCQQAQSWFQLCAHPVLVPLGGFLQPPGGPLRATLSGCHKGITAMAWGVEEKLLVIGTQDGIMAVWDMEEQHVIHMLTGHTGEVRCVKIFAKGTLANSASKDYTLHLWNLLSGQEKFTIWDGGSKNPAEPQIWNLHVDEAHKVVYSASGSKINAWNLETAEPVFHILGDASDPWMCMAVLASQATLLTVSRDGVVSLWSSATGKLQGKQHMSSIKEETPTCAVSVQKQGKLVTGFSNGSISLVSSKGDRLLEKLPDAVRFLVVSEDESLLAAGFGRSVRIFLADSRGFRRFMAMDLEHEDMVETAVFGTENNLIITGSLDALIQVWSLSEQGTLLDILEGVGAPVSLLARGGALVASASPQSSSFKVWDLSDAHRSRVPAPFLDRTGLTAVSHNGSYVYFPKIGDKNKVTIWDLAEGEEQDSLDTSSEIRCLEVAEQRKLLFTGLVSGVVLVFPLNSRQDVICIPPPEARKAINCMSLSKCEDRLAIAYDNIVLVLDITSGDPCPVIDGPRYTFYTQLPETLSSVAILTDYRVVYSMTNGDLFLYECATSKAFPLETHRSRVACVEVSHKEQLVVSGSEDALLCLWDLQARKWKFEMSYTSSYCRGVQCACFSKDDKYVYVGLKDRSILVWSVLDGTLLTVQFVHAVVNRIIPTTSGFIAPTRHGYLIRENFQCLSAKASPQDPLKNFKKAMWMVKSRQREELVAAAGAPQDLESESAQGNETKSNKCSQVCLIV.

The NACHT domain maps to 335-661 (TPLVLFGPPG…LLAIAHRQLV (327 aa)). 341 to 348 (GPPGIGKT) is a binding site for ATP. 14 WD repeats span residues 866-905 (GCHK…VIHM), 908-947 (GHTG…EKFT), 956-994 (PAEP…PVFH), 998-1037 (DASD…LQGK), 1044-1082 (KEET…LLEK), 1083-1121 (LPDA…RRFM), 1126-1165 (EHED…TLLD), 1167-1207 (LEGV…RSRV), 1212-1251 (LDRT…EQDS), 1253-1290 (DTSS…RQDV), 1291-1327 (ICIP…VLDI), 1338-1376 (GPRY…LYEC), 1380-1418 (KAFP…WDLQ), and 1425-1462 (EMSY…VWSV).

In terms of assembly, may interact with HSP90AA1, HSP90AB1 and BAG2. Expressed at highest levels in prostate, followed by testis, retina, trachea and optic nerve. Also detected in brain, epididymis, lung, vagina and pituitary. In the prostate, tends to be up-regulated during malignant progression compared to normal epithelium (at protein level).

It is found in the cytoplasm. The protein resides in the cytosol. Its function is as follows. May play a role in the control of androgen receptor (AR) protein steady-state levels. This chain is NACHT domain- and WD repeat-containing protein 1 (NWD1), found in Homo sapiens (Human).